The chain runs to 260 residues: MPKRTYAMRYVAGQPVEQIFPGSAKQLGQGLPPGAPLPTTEFLRVMVWNIFKQQRAQWLSVLKEFGRDAQLMLLQEAQTTPELVRFATSHYQAADQVPAFALPQHPSGVMTLAATHPVYCCPLREREPLLRLSKSALITVYPIHDGRLLMVVNIHAVNFSLGVDVYSKQLEPIGEQIAMHRGPVILAGDFNAWSRQRVNALQRFAQGLGLEEVEFSTDNRSRAFGKPLDFVFYRGLTLADASVLVTRASDHNPLLVEFQP.

This sequence belongs to the UPF0294 family.

The protein localises to the cytoplasm. The protein is UPF0294 protein YE0917 of Yersinia enterocolitica serotype O:8 / biotype 1B (strain NCTC 13174 / 8081).